The following is a 105-amino-acid chain: Phosphoribosyl-ATP pyrophosphatase (105 aa).

This sequence belongs to the PRA-PH family.

It localises to the cytoplasm. The enzyme catalyses 1-(5-phospho-beta-D-ribosyl)-ATP + H2O = 1-(5-phospho-beta-D-ribosyl)-5'-AMP + diphosphate + H(+). It functions in the pathway amino-acid biosynthesis; L-histidine biosynthesis; L-histidine from 5-phospho-alpha-D-ribose 1-diphosphate: step 2/9. This chain is Phosphoribosyl-ATP pyrophosphatase, found in Ruegeria sp. (strain TM1040) (Silicibacter sp.).